The chain runs to 76 residues: Sulfur carrier protein TusA (76 aa).

Cysteine 14 (cysteine persulfide intermediate) is an active-site residue.

The protein belongs to the sulfur carrier protein TusA family. In terms of assembly, interacts with IscS.

The protein localises to the cytoplasm. Its pathway is tRNA modification. Functionally, sulfur carrier protein involved in sulfur trafficking in the cell. Part of a sulfur-relay system required for 2-thiolation during synthesis of 2-thiouridine of the modified wobble base 5-methylaminomethyl-2-thiouridine (mnm(5)s(2)U) in tRNA. Interacts with IscS and stimulates its cysteine desulfurase activity. Accepts an activated sulfur from IscS, which is then transferred to TusD, and thus determines the direction of sulfur flow from IscS to 2-thiouridine formation. Also appears to be involved in sulfur transfer for the biosynthesis of molybdopterin. The polypeptide is Sulfur carrier protein TusA (Buchnera aphidicola subsp. Acyrthosiphon pisum (strain Tuc7)).